Here is a 108-residue protein sequence, read N- to C-terminus: Hydrogenase expression/formation protein HupN (108 aa).

The disordered stretch occupies residues arginine 88–proline 108.

It belongs to the HupF/HypC family.

The protein is Hydrogenase expression/formation protein HupN (hupN) of Azotobacter chroococcum mcd 1.